The chain runs to 436 residues: GTPase Der (436 aa).

2 EngA-type G domains span residues P4 to E167 and I176 to K351. GTP-binding positions include G10–S17, D57–I61, N119–D122, G182–S189, D229–M233, and N294–D297. Residues K352–N436 enclose the KH-like domain.

This sequence belongs to the TRAFAC class TrmE-Era-EngA-EngB-Septin-like GTPase superfamily. EngA (Der) GTPase family. As to quaternary structure, associates with the 50S ribosomal subunit.

Functionally, GTPase that plays an essential role in the late steps of ribosome biogenesis. The sequence is that of GTPase Der from Staphylococcus aureus (strain Mu3 / ATCC 700698).